We begin with the raw amino-acid sequence, 483 residues long: Shaker-related potassium channel tsha2 (483 aa).

Over 1-165 the chain is Cytoplasmic; that stretch reads MTVVSCEIQD…YPESSGPARM (165 aa). A helical transmembrane segment spans residues 166-186; the sequence is IAVVSVSVIVISIVIFCLETL. Residues 187 to 220 lie on the Extracellular side of the membrane; it reads PQFREDTSANLPLSNHHTTNGTTLHKKPNLFTDP. Residues 221-241 traverse the membrane as a helical segment; the sequence is FFMVETLCIVWFSFEFLVRFL. The Cytoplasmic segment spans residues 242–252; that stretch reads SCPSKPAFFKN. A lipid anchor (S-palmitoyl cysteine) is attached at cysteine 243. The chain crosses the membrane as a helical span at residues 253–273; it reads AMNSIDILAIAPYFITLGLEL. Topologically, residues 274–324 are extracellular; that stretch reads AEQQEAGSEQAMSLAILRVIRLVRVFRIFKLSRHSKGLQILGQTLHASISE. Residues 325-345 traverse the membrane as a helical; Voltage-sensor segment; the sequence is LGLLIFFLLIGVILFSSAVYF. Over 346-353 the chain is Cytoplasmic; the sequence is AEADDPES. The chain crosses the membrane as a helical span at residues 354-374; that stretch reads GFSSIPAAFWWAVVSMTTVGY. The short motif at 371 to 376 is the Selectivity filter element; the sequence is TVGYGD. Residues 375-385 are Extracellular-facing; sequence GDMCPVTIGGK. A helical membrane pass occupies residues 386–406; sequence IVGSMCAIAGVLTIALPVPVI. Over 407 to 483 the chain is Cytoplasmic; it reads VSNFNYFYHR…EHYTGKLTDV (77 aa). Position 426 is a phosphotyrosine (tyrosine 426). The residue at position 430 (threonine 430) is a Phosphothreonine. A compositionally biased stretch (polar residues) spans 440-452; it reads EFKSTSDSRQSLT. A disordered region spans residues 440–459; that stretch reads EFKSTSDSRQSLTKSEDTEE. Positions 481 to 483 match the PDZ-binding motif; sequence TDV.

This sequence belongs to the potassium channel family. A (Shaker) (TC 1.A.1.2) subfamily. As to quaternary structure, heterotetramer of potassium channel proteins. Binds PDZ domains of dlg1, dlg2 and dlg4. Expressed in oligodendrocytes and astrocytes.

It is found in the membrane. Its function is as follows. Mediates the voltage-dependent potassium ion permeability of excitable membranes. Assuming opened or closed conformations in response to the voltage difference across the membrane, the protein forms a potassium-selective channel through which potassium ions may pass in accordance with their electrochemical gradient. This is Shaker-related potassium channel tsha2 from Oncorhynchus mykiss (Rainbow trout).